Reading from the N-terminus, the 831-residue chain is Phosphoinositide phosphatase SAC4 (831 aa).

Residues 162–551 form the SAC domain; the sequence is LCMVDLTKDF…GDTLAYQYGG (390 aa). Residues 439-475 form a disordered region; the sequence is SDADTSPHNSSDDDSRDYDSLEKNCRPSKNVANGDYD. The span at 448–463 shows a compositional bias: basic and acidic residues; the sequence is SSDDDSRDYDSLEKNC. Positions 487-498 match the Phosphatase catalytic core motif; sequence RTNCIDCLDRTN. The tract at residues 785–805 is disordered; that stretch reads PAMRESGSSSRKGKEPVETEL. Over residues 796–805 the composition is skewed to basic and acidic residues; the sequence is KGKEPVETEL.

In terms of assembly, component of the PI(3,5)P2 regulatory complex at least composed of ATG18, SAC/FIG4, FAB1 and VAC14. Mg(2+) serves as cofactor. As to expression, ubiquitous with a higher level of expression in young seedlings than in other tissues.

It localises to the vacuole membrane. It catalyses the reaction a 1,2-diacyl-sn-glycero-3-phospho-(1D-myo-inositol-3,5-bisphosphate) + H2O = a 1,2-diacyl-sn-glycero-3-phospho-(1D-myo-inositol-3-phosphate) + phosphate. Its function is as follows. The PI(3,5)P2 regulatory complex regulates both the synthesis and turnover of phosphatidylinositol 3,5-bisphosphate (PtdIns(3,5)P2). In Arabidopsis thaliana (Mouse-ear cress), this protein is Phosphoinositide phosphatase SAC4 (SAC4).